The primary structure comprises 178 residues: Transcriptional repressor NrdR (178 aa).

Positions 1-21 (MRCPFCGHEDTQVKDSRPHED) are disordered. Residues 3 to 34 (CPFCGHEDTQVKDSRPHEDGAAIRRRRICAAC) fold into a zinc finger. Basic and acidic residues predominate over residues 7–21 (GHEDTQVKDSRPHED). The ATP-cone domain occupies 49–139 (LYVVKADDRR…VHWDFRETKD (91 aa)).

Belongs to the NrdR family. Requires Zn(2+) as cofactor.

Its function is as follows. Negatively regulates transcription of bacterial ribonucleotide reductase nrd genes and operons by binding to NrdR-boxes. The protein is Transcriptional repressor NrdR of Gluconacetobacter diazotrophicus (strain ATCC 49037 / DSM 5601 / CCUG 37298 / CIP 103539 / LMG 7603 / PAl5).